A 543-amino-acid chain; its full sequence is Allantoate permease (543 aa).

Residues 1–80 lie on the Cytoplasmic side of the membrane; that stretch reads MSADASTNSN…PEEDRKLRWK (80 aa). The chain crosses the membrane as a helical span at residues 81 to 97; that stretch reads IDYCMFPLMCILYAVQF. Residues 98 to 123 are Extracellular-facing; the sequence is MDKISTSSAAVMGLRTDLKMHGDQYS. The helical transmembrane segment at 124 to 145 threads the bilayer; the sequence is WVTSAFYFGYLFMNLGPVQFIF. Residues 146–154 lie on the Cytoplasmic side of the membrane; that stretch reads QRTSHMSKM. The chain crosses the membrane as a helical span at residues 155 to 171; the sequence is LAVFIVIWGMLLALHAA. At 172-178 the chain is on the extracellular side; it reads PTVKYPS. Residues 179 to 200 form a helical membrane-spanning segment; it reads FIVLRVLLGCAESVVTPCFTII. The Cytoplasmic segment spans residues 201–213; it reads TAQYWKTEEQFTR. A helical transmembrane segment spans residues 214–237; that stretch reads VSIWFGMNGLGSILINAIAYGVYI. The Extracellular segment spans residues 238–248; that stretch reads HQDSYAIKGWR. A helical transmembrane segment spans residues 249–269; the sequence is TLFVITGVITIFIGILIFLWI. Residues 270 to 317 lie on the Cytoplasmic side of the membrane; the sequence is PDDPSKARFLSKREKLMVVQRIRSNQQGFGNHEIKKYQIIEALKDVRT. Residues 318 to 342 form a helical membrane-spanning segment; the sequence is WLYFLFTVSSNIPNGGISSFMSILL. Over 343–352 the chain is Extracellular; sequence NSDFGYSSKE. Residues 353-377 form a helical membrane-spanning segment; the sequence is TLLMGLPTGAVELVGCPLFGILAVY. Residues 378–389 are Cytoplasmic-facing; sequence AANKKIPFWKYK. The helical transmembrane segment at 390 to 411 threads the bilayer; it reads LSWAIFAAVLALIASCMLGFAT. Residues 412 to 417 lie on the Extracellular side of the membrane; that stretch reads NSKKAR. The helical transmembrane segment at 418–435 threads the bilayer; that stretch reads LAGAYLWYISPVSFICVL. The Cytoplasmic portion of the chain corresponds to 436 to 453; it reads SNISANSSGYSKKWTVSS. A helical membrane pass occupies residues 454-472; it reads INLVAYAAANLAGPQTFIA. The Extracellular portion of the chain corresponds to 473-482; it reads KQAPKYHGAK. A helical membrane pass occupies residues 483-504; the sequence is VAMVVCYAVMIVLLSILLIVNL. The Cytoplasmic portion of the chain corresponds to 505–543; it reads RENKRRDKIAAERGFPEETENLEFSDLTDFENPNFRYTL.

This sequence belongs to the major facilitator superfamily. Allantoate permease family.

Its subcellular location is the membrane. Component of the allantoate transport system. In Saccharomyces cerevisiae (strain ATCC 204508 / S288c) (Baker's yeast), this protein is Allantoate permease (DAL5).